Here is a 187-residue protein sequence, read N- to C-terminus: Threonylcarbamoyl-AMP synthase (187 aa).

A YrdC-like domain is found at 4–187 (NHTDDPFLLD…GHSGQTIRDN (184 aa)). The interval 168 to 187 (GSRSPSKIRHGHSGQTIRDN) is disordered.

The protein belongs to the SUA5 family. TsaC subfamily.

Its subcellular location is the cytoplasm. It catalyses the reaction L-threonine + hydrogencarbonate + ATP = L-threonylcarbamoyladenylate + diphosphate + H2O. In terms of biological role, required for the formation of a threonylcarbamoyl group on adenosine at position 37 (t(6)A37) in tRNAs that read codons beginning with adenine. Catalyzes the conversion of L-threonine, HCO(3)(-)/CO(2) and ATP to give threonylcarbamoyl-AMP (TC-AMP) as the acyladenylate intermediate, with the release of diphosphate. This chain is Threonylcarbamoyl-AMP synthase, found in Pseudoalteromonas atlantica (strain T6c / ATCC BAA-1087).